The chain runs to 352 residues: S-adenosylmethionine:tRNA ribosyltransferase-isomerase (352 aa).

This sequence belongs to the QueA family. In terms of assembly, monomer.

It localises to the cytoplasm. The enzyme catalyses 7-aminomethyl-7-carbaguanosine(34) in tRNA + S-adenosyl-L-methionine = epoxyqueuosine(34) in tRNA + adenine + L-methionine + 2 H(+). Its pathway is tRNA modification; tRNA-queuosine biosynthesis. In terms of biological role, transfers and isomerizes the ribose moiety from AdoMet to the 7-aminomethyl group of 7-deazaguanine (preQ1-tRNA) to give epoxyqueuosine (oQ-tRNA). This chain is S-adenosylmethionine:tRNA ribosyltransferase-isomerase, found in Vibrio cholerae serotype O1 (strain ATCC 39315 / El Tor Inaba N16961).